Reading from the N-terminus, the 250-residue chain is Uridylate kinase (250 aa).

Residue 19 to 22 coordinates ATP; the sequence is KLSG. Residue Gly61 coordinates UMP. Residues Gly62 and Arg66 each coordinate ATP. Residues Asp81 and 142-149 each bind UMP; that span reads TGNPFFTT. Residues Thr169, Gln170, Tyr175, and Asp178 each coordinate ATP.

Belongs to the UMP kinase family. Homohexamer.

The protein resides in the cytoplasm. It catalyses the reaction UMP + ATP = UDP + ADP. The protein operates within pyrimidine metabolism; CTP biosynthesis via de novo pathway; UDP from UMP (UMPK route): step 1/1. Its activity is regulated as follows. Inhibited by UTP. Catalyzes the reversible phosphorylation of UMP to UDP. The sequence is that of Uridylate kinase from Rhodospirillum rubrum (strain ATCC 11170 / ATH 1.1.1 / DSM 467 / LMG 4362 / NCIMB 8255 / S1).